We begin with the raw amino-acid sequence, 298 residues long: ATP synthase gamma chain (298 aa).

Belongs to the ATPase gamma chain family. As to quaternary structure, F-type ATPases have 2 components, CF(1) - the catalytic core - and CF(0) - the membrane proton channel. CF(1) has five subunits: alpha(3), beta(3), gamma(1), delta(1), epsilon(1). CF(0) has three main subunits: a, b and c.

It is found in the cell inner membrane. Its function is as follows. Produces ATP from ADP in the presence of a proton gradient across the membrane. The gamma chain is believed to be important in regulating ATPase activity and the flow of protons through the CF(0) complex. The chain is ATP synthase gamma chain from Francisella tularensis subsp. mediasiatica (strain FSC147).